The sequence spans 425 residues: MAVPAASSIVSYGGAATSNFLTTPVTPFLAGFYNSNFVTDRINSCAPYRVDRIRKQLQDEEENGYPPADDRRRGALFCRSGTWLEMLPIENPDDGSTRVKVHGTKEESSKFSIVEFVSVAMSLVSIRGVETKNFICMDPSGKLYATPSSNYSTECVFLEEMMENYYNLYASCAYGDRFNPWYIELRRSGKPRRGPNSKKRRKASHFLVVHHDLDRLRSPVPNGNDVTDLVVASLFHQPPSHPLFRQQTVTKPPNPHRISNLRAKVEMTNQAEKQRLLEEKKRRREKKKRRREDRLRKEEQIREARRQELKSLREEELRRRYQQQQQQQASTQTRYNRPQNPANPYPTYRPLPTRSTVQSPRPAYNPYWQSPVTQAPHHNSHHHHHHHPRVSSSSDPQQRHQSQQHYLAQTVSNPNRQNVNYQRYP.

Disordered regions lie at residues 277-298 (LEEKKRRREKKKRRREDRLRKE) and 314-425 (EEEL…QRYP). Residues 281–291 (KRRREKKKRRR) show a composition bias toward basic residues. The span at 329 to 340 (ASTQTRYNRPQN) shows a compositional bias: polar residues. The span at 378–389 (HNSHHHHHHHPR) shows a compositional bias: basic residues. Polar residues predominate over residues 395-425 (DPQQRHQSQQHYLAQTVSNPNRQNVNYQRYP).

It belongs to the heparin-binding growth factors family. In terms of assembly, interacts with pal-1. In terms of tissue distribution, expressed in pharynx, CAN neuron and body wall muscles.

The protein localises to the nucleus. Its subcellular location is the membrane. Its function is as follows. Required for larval development. Probably by binding receptor egl-15, negatively regulates membrane protrusion from body wall muscles during larval development. This is Protein let-756 (let-756) from Caenorhabditis elegans.